We begin with the raw amino-acid sequence, 2162 residues long: Polyketide synthase 1 (2162 aa).

The segment at 19-264 is N-terminal acylcarrier protein transacylase domain (SAT); that stretch reads FVFGDQTSCN…TPLAVHAPYH (246 aa). Residues 397 to 841 enclose the Ketosynthase family 3 (KS3) domain; that stretch reads DSKIAIIGMS…GGNTALLVED (445 aa). Active-site for beta-ketoacyl synthase activity residues include cysteine 578, histidine 713, and histidine 757. The interval 941 to 1245 is malonyl-CoA:ACP transacylase (MAT) domain; the sequence is AFVFSGQGSQ…PSLMRSHDGW (305 aa). Serine 1030 (for acyl/malonyl transferase activity) is an active-site residue. The tract at residues 1322-1636 is product template (PT) domain; the sequence is TASVHRIVRE…RRVLDAAMPA (315 aa). The interval 1326–1459 is N-terminal hotdog fold; the sequence is HRIVRESVDR…SSLCFGESRA (134 aa). The PKS/mFAS DH domain occupies 1326 to 1631; it reads HRIVRESVDR…FQGVPRRVLD (306 aa). The Proton acceptor; for dehydratase activity role is filled by histidine 1358. The interval 1486-1631 is C-terminal hotdog fold; that stretch reads LNSRLSSGVI…FQGVPRRVLD (146 aa). Residue aspartate 1545 is the Proton donor; for dehydratase activity of the active site. The interval 1633–1669 is disordered; it reads AMPAPKSPNKTRDHASPNATISRAKPPQGSSPASSAQ. Residues 1658-1669 are compositionally biased toward low complexity; that stretch reads PPQGSSPASSAQ. Positions 1692-1766 constitute a Carrier 1 domain; the sequence is IDPMHAVLRI…DFAVHLGLDT (75 aa). At serine 1726 the chain carries O-(pantetheine 4'-phosphoryl)serine. Residues 1772–1783 are compositionally biased toward low complexity; sequence SSGESNVSGGVS. The disordered stretch occupies residues 1772-1809; sequence SSGESNVSGGVSPRSDSVAAMSSDVTTPPAQSPLGSMS. Residues 1794–1809 show a composition bias toward polar residues; sequence SDVTTPPAQSPLGSMS. Positions 1807-1884 constitute a Carrier 2 domain; sequence SMSSSPCEDL…SFKHVFEQEI (78 aa). Residue serine 1844 is modified to O-(pantetheine 4'-phosphoryl)serine. The segment at 1896-2160 is thioesterase (TE) domain; that stretch reads LKKYHATSTL…ERVAAFIRSA (265 aa). Serine 1987 acts as the For thioesterase activity in catalysis.

Its function is as follows. Polyketide synthase; part of the Pks1 gene cluster that mediates the biosynthesis of an anthraquinone derivative pigment that contributes to conidial pigmentation that provides protection from UV radiation, heat and cold stress. The polyketide synthase Pks1 produces 1-acetyl-2,4,6,8-tetrahydroxy-9,10-anthraquinone though condensation of acetyl-CoA with malonyl-CoA. The dehydratase EthD and the laccase Mlac1 further convert the anthraquinone derivative into the final conidial pigment. This Metarhizium album (strain ARSEF 1941) protein is Polyketide synthase 1.